The chain runs to 425 residues: Phosphoribosylamine--glycine ligase (425 aa).

The 206-residue stretch at 107 to 312 (KDLCARYNIP…LLVLLNAAVD (206 aa)) folds into the ATP-grasp domain. 133–193 (VDQTGAPIVI…EEFMTGEEAS (61 aa)) lines the ATP pocket. Residues 214–233 (RVGDGDVGPNTGGMGAYSPA) are disordered. Mg(2+)-binding residues include E282 and N284.

It belongs to the GARS family. Mg(2+) serves as cofactor. The cofactor is Mn(2+).

The enzyme catalyses 5-phospho-beta-D-ribosylamine + glycine + ATP = N(1)-(5-phospho-beta-D-ribosyl)glycinamide + ADP + phosphate + H(+). The protein operates within purine metabolism; IMP biosynthesis via de novo pathway; N(1)-(5-phospho-D-ribosyl)glycinamide from 5-phospho-alpha-D-ribose 1-diphosphate: step 2/2. This is Phosphoribosylamine--glycine ligase from Mesorhizobium japonicum (strain LMG 29417 / CECT 9101 / MAFF 303099) (Mesorhizobium loti (strain MAFF 303099)).